A 329-amino-acid chain; its full sequence is Beta-ketoacyl-[acyl-carrier-protein] synthase III (329 aa).

Catalysis depends on residues cysteine 112 and histidine 253. The tract at residues 254–258 is ACP-binding; the sequence is QANQR. The active site involves asparagine 283.

It belongs to the thiolase-like superfamily. FabH family. In terms of assembly, homodimer.

The protein localises to the cytoplasm. It carries out the reaction malonyl-[ACP] + acetyl-CoA + H(+) = 3-oxobutanoyl-[ACP] + CO2 + CoA. It functions in the pathway lipid metabolism; fatty acid biosynthesis. Its function is as follows. Catalyzes the condensation reaction of fatty acid synthesis by the addition to an acyl acceptor of two carbons from malonyl-ACP. Catalyzes the first condensation reaction which initiates fatty acid synthesis and may therefore play a role in governing the total rate of fatty acid production. Possesses both acetoacetyl-ACP synthase and acetyl transacylase activities. Its substrate specificity determines the biosynthesis of branched-chain and/or straight-chain of fatty acids. The protein is Beta-ketoacyl-[acyl-carrier-protein] synthase III of Gloeobacter violaceus (strain ATCC 29082 / PCC 7421).